The following is a 477-amino-acid chain: Probable F-box protein At5g25300 (477 aa).

A coiled-coil region spans residues 346-377 (VDMNKEDSQIEINEKETKINQEHDQSDETQAK). In terms of domain architecture, F-box spans 412–458 (SPPWSELPGDILRSVFERLSFVDFQRAKQTCPIKRSKSNCLRLWLIT).

The polypeptide is Probable F-box protein At5g25300 (Arabidopsis thaliana (Mouse-ear cress)).